A 328-amino-acid chain; its full sequence is Endochitinase (328 aa).

Positions 1–27 (MKKNRMMMMIWSVGVVWMLLLVGGSYG) are cleaved as a signal peptide. The Chitin-binding type-1 domain occupies 28 to 68 (EQCGRQAGGALCPGGNCCSQFGWCGSTTDYCGPGCQSQCGG). Cystine bridges form between C30–C45, C39–C51, C44–C58, C62–C66, C97–C159, C170–C178, and C277–C309. E141 (proton donor) is an active-site residue. A propeptide spans 318-328 (SLLLSDLVTSQ) (removed in mature form).

The protein belongs to the glycosyl hydrolase 19 family. Chitinase class I subfamily.

It localises to the vacuole. It carries out the reaction Random endo-hydrolysis of N-acetyl-beta-D-glucosaminide (1-&gt;4)-beta-linkages in chitin and chitodextrins.. Defense against chitin-containing fungal pathogens. This Phaseolus vulgaris (Kidney bean) protein is Endochitinase.